Reading from the N-terminus, the 192-residue chain is Superoxide dismutase [Fe] (192 aa).

Positions 27, 74, 157, and 161 each coordinate Fe cation.

Belongs to the iron/manganese superoxide dismutase family. As to quaternary structure, homodimer. Fe cation serves as cofactor.

The catalysed reaction is 2 superoxide + 2 H(+) = H2O2 + O2. In terms of biological role, destroys superoxide anion radicals which are normally produced within the cells and which are toxic to biological systems. In Legionella pneumophila subsp. pneumophila (strain Philadelphia 1 / ATCC 33152 / DSM 7513), this protein is Superoxide dismutase [Fe] (sodB).